A 314-amino-acid chain; its full sequence is Homoserine O-acetyltransferase (314 aa).

Cys142 serves as the catalytic Acyl-thioester intermediate. Substrate is bound by residues Lys163 and Ser192. His235 functions as the Proton acceptor in the catalytic mechanism. Glu237 is a catalytic residue. Residue Arg249 participates in substrate binding.

This sequence belongs to the MetA family.

Its subcellular location is the cytoplasm. The catalysed reaction is L-homoserine + acetyl-CoA = O-acetyl-L-homoserine + CoA. It participates in amino-acid biosynthesis; L-methionine biosynthesis via de novo pathway; O-acetyl-L-homoserine from L-homoserine: step 1/1. Functionally, transfers an acetyl group from acetyl-CoA to L-homoserine, forming acetyl-L-homoserine. The chain is Homoserine O-acetyltransferase from Streptococcus pneumoniae (strain Taiwan19F-14).